The sequence spans 461 residues: Fumarate hydratase class II (461 aa).

Residues 98-100, 129-132, 139-141, and Thr187 contribute to the substrate site; these read SGT, HPND, and SSN. Residues 120–140 are disordered; the sequence is SKKGGKSPVHPNDHVNKGQSS. His188 serves as the catalytic Proton donor/acceptor. Ser318 is an active-site residue. Substrate-binding positions include Ser319 and 324 to 326; that span reads KVN.

This sequence belongs to the class-II fumarase/aspartase family. Fumarase subfamily. Homotetramer.

It is found in the cytoplasm. It catalyses the reaction (S)-malate = fumarate + H2O. It functions in the pathway carbohydrate metabolism; tricarboxylic acid cycle; (S)-malate from fumarate: step 1/1. Its function is as follows. Involved in the TCA cycle. Catalyzes the stereospecific interconversion of fumarate to L-malate. This Rickettsia felis (strain ATCC VR-1525 / URRWXCal2) (Rickettsia azadi) protein is Fumarate hydratase class II.